Here is a 349-residue protein sequence, read N- to C-terminus: E3 ubiquitin-protein ligase SINA-like 10 (349 aa).

The segment at 1-77 is disordered; that stretch reads MARFSVCGGD…STSDDSDREV (77 aa). Residues 113-149 form an RING-type; degenerate zinc finger; that stretch reads CPICCEPLKIPIFQCDNGHLACTLCCTKVRNRCPSCT. Residues 163 to 344 are SBD; the sequence is VIEASRVSCL…NLQIWIGHGR (182 aa). The SIAH-type zinc finger occupies 166 to 224; that stretch reads ASRVSCLNAKYGCKESTSYGNRFSHEQVCVFTPCSCPILDCHYTGYYKDLNNHVRAEHK. Cys-171, Cys-178, His-190, Cys-194, Cys-201, Cys-206, His-218, and His-223 together coordinate Zn(2+).

The protein belongs to the SINA (Seven in absentia) family.

It catalyses the reaction S-ubiquitinyl-[E2 ubiquitin-conjugating enzyme]-L-cysteine + [acceptor protein]-L-lysine = [E2 ubiquitin-conjugating enzyme]-L-cysteine + N(6)-ubiquitinyl-[acceptor protein]-L-lysine.. Its pathway is protein modification; protein ubiquitination. In terms of biological role, E3 ubiquitin-protein ligase that mediates ubiquitination and subsequent proteasomal degradation of target proteins. E3 ubiquitin ligases accept ubiquitin from an E2 ubiquitin-conjugating enzyme in the form of a thioester and then directly transfers the ubiquitin to targeted substrates. It probably triggers the ubiquitin-mediated degradation of different substrates. In Arabidopsis thaliana (Mouse-ear cress), this protein is E3 ubiquitin-protein ligase SINA-like 10.